The following is a 1373-amino-acid chain: DNA-directed RNA polymerase subunit beta (1373 aa).

This sequence belongs to the RNA polymerase beta chain family. In terms of assembly, the RNAP catalytic core consists of 2 alpha, 1 beta, 1 beta' and 1 omega subunit. When a sigma factor is associated with the core the holoenzyme is formed, which can initiate transcription.

It catalyses the reaction RNA(n) + a ribonucleoside 5'-triphosphate = RNA(n+1) + diphosphate. DNA-dependent RNA polymerase catalyzes the transcription of DNA into RNA using the four ribonucleoside triphosphates as substrates. The chain is DNA-directed RNA polymerase subunit beta from Rickettsia conorii (strain ATCC VR-613 / Malish 7).